A 324-amino-acid polypeptide reads, in one-letter code: DNA-directed RNA polymerase subunit alpha (324 aa).

Positions 1 to 228 are alpha N-terminal domain (alpha-NTD); the sequence is MIEFQKPTIR…EHFNLFTDLS (228 aa). Residues 245-324 are alpha C-terminal domain (alpha-CTD); that stretch reads RNKLLDMTIE…STPKEEEEEK (80 aa).

Belongs to the RNA polymerase alpha chain family. In terms of assembly, homodimer. The RNAP catalytic core consists of 2 alpha, 1 beta, 1 beta' and 1 omega subunit. When a sigma factor is associated with the core the holoenzyme is formed, which can initiate transcription.

It catalyses the reaction RNA(n) + a ribonucleoside 5'-triphosphate = RNA(n+1) + diphosphate. Its function is as follows. DNA-dependent RNA polymerase catalyzes the transcription of DNA into RNA using the four ribonucleoside triphosphates as substrates. This is DNA-directed RNA polymerase subunit alpha from Caldicellulosiruptor bescii (strain ATCC BAA-1888 / DSM 6725 / KCTC 15123 / Z-1320) (Anaerocellum thermophilum).